We begin with the raw amino-acid sequence, 360 residues long: 3-dehydroquinate synthase (360 aa).

NAD(+)-binding positions include 72 to 77, 106 to 110, 130 to 131, Lys143, and Lys152; these read DGEEYK, GVIGD, and TT. Residues Glu185, His248, and His265 each contribute to the Zn(2+) site.

It belongs to the sugar phosphate cyclases superfamily. Dehydroquinate synthase family. Co(2+) serves as cofactor. Requires Zn(2+) as cofactor. NAD(+) is required as a cofactor.

The protein localises to the cytoplasm. The enzyme catalyses 7-phospho-2-dehydro-3-deoxy-D-arabino-heptonate = 3-dehydroquinate + phosphate. Its pathway is metabolic intermediate biosynthesis; chorismate biosynthesis; chorismate from D-erythrose 4-phosphate and phosphoenolpyruvate: step 2/7. Its function is as follows. Catalyzes the conversion of 3-deoxy-D-arabino-heptulosonate 7-phosphate (DAHP) to dehydroquinate (DHQ). This Geotalea uraniireducens (strain Rf4) (Geobacter uraniireducens) protein is 3-dehydroquinate synthase.